The sequence spans 287 residues: MAEARASRWYFGGLASCGAACCTHPLDLLKVHLQTQQEVKLRMTGMALQVVRTDGFLALYNGLSASLCRQMTYSLTRFAIYETMRDYMTKDSQGPLPFYNKVLLGGISGLTGGFVGTPADLVNVRMQNDMKLPPSQRRNYSHALDGLYRVAREESLRKLFSGATMASSRGALVTVGQLSCYDQAKQLVLSTGYLSDNIFTHFVSSFIAGGCATFLCQPLDVLKTRLMNSKGEYQGVFHCAMETAKLGPQAFFKGLFPAGIRLIPHTVLTFMFLEQLRKHFGIKVPTT.

3 Solcar repeats span residues 7 to 87 (SRWY…MRDY), 100 to 187 (NKVL…AKQL), and 196 to 279 (DNIF…LRKH). 3 helical membrane passes run 9 to 29 (WYFGGLASCGAACCTHPLDLL), 62 to 81 (GLSASLCRQMTYSLTRFAIY), and 102 to 122 (VLLGGISGLTGGFVGTPADLV). Residue Lys-158 is modified to N6-acetyllysine. 3 consecutive transmembrane segments (helical) span residues 162–181 (GATMASSRGALVTVGQLSCY), 202–222 (FVSSFIAGGCATFLCQPLDVL), and 254–274 (GLFPAGIRLIPHTVLTFMFLE).

Belongs to the mitochondrial carrier (TC 2.A.29) family. In terms of tissue distribution, expressed at very high levels in white adipose tissue. And at low levels in brown adipose tissue, kidney and liver.

It is found in the mitochondrion inner membrane. It catalyses the reaction (S)-malate(in) + phosphate(out) = (S)-malate(out) + phosphate(in). It carries out the reaction malonate(out) + (S)-malate(in) = malonate(in) + (S)-malate(out). The enzyme catalyses (S)-malate(in) + succinate(out) = (S)-malate(out) + succinate(in). The catalysed reaction is (S)-malate(in) + sulfate(out) = (S)-malate(out) + sulfate(in). It catalyses the reaction malonate(out) + phosphate(in) = malonate(in) + phosphate(out). It carries out the reaction succinate(out) + phosphate(in) = succinate(in) + phosphate(out). The enzyme catalyses sulfate(out) + phosphate(in) = sulfate(in) + phosphate(out). The catalysed reaction is malonate(out) + succinate(in) = malonate(in) + succinate(out). Regulated by circadian protein CLOCK (Circadian Locomotor Output Cycles Kaput). Functionally, catalyzes the electroneutral exchange or flux of physiologically important metabolites such as dicarboxylates (malonate, malate, succinate), inorganic sulfur-containing anions, and phosphate, across mitochondrial inner membrane. Plays an important role in gluconeogenesis, fatty acid metabolism, urea synthesis, and sulfur metabolism, particularly in liver, by supplying the substrates for the different metabolic processes. Regulates fatty acid release from adipocytes, and contributes to systemic insulin sensitivity. The polypeptide is Mitochondrial dicarboxylate carrier (Mus musculus (Mouse)).